Here is a 711-residue protein sequence, read N- to C-terminus: Phosphate acetyltransferase (711 aa).

Residues 390 to 711 (AFRFQLTELA…IALTAIQATQ (322 aa)) are phosphate acetyltransferase.

This sequence in the N-terminal section; belongs to the CobB/CobQ family. The protein in the C-terminal section; belongs to the phosphate acetyltransferase and butyryltransferase family. Homohexamer.

It localises to the cytoplasm. It catalyses the reaction acetyl-CoA + phosphate = acetyl phosphate + CoA. The protein operates within metabolic intermediate biosynthesis; acetyl-CoA biosynthesis; acetyl-CoA from acetate: step 2/2. In terms of biological role, involved in acetate metabolism. The polypeptide is Phosphate acetyltransferase (pta) (Haemophilus influenzae (strain ATCC 51907 / DSM 11121 / KW20 / Rd)).